A 150-amino-acid chain; its full sequence is 3-hydroxyacyl-[acyl-carrier-protein] dehydratase FabZ (150 aa).

The active site involves H51.

It belongs to the thioester dehydratase family. FabZ subfamily.

The protein localises to the cytoplasm. It catalyses the reaction a (3R)-hydroxyacyl-[ACP] = a (2E)-enoyl-[ACP] + H2O. Its function is as follows. Involved in unsaturated fatty acids biosynthesis. Catalyzes the dehydration of short chain beta-hydroxyacyl-ACPs and long chain saturated and unsaturated beta-hydroxyacyl-ACPs. This chain is 3-hydroxyacyl-[acyl-carrier-protein] dehydratase FabZ, found in Geobacter sulfurreducens (strain ATCC 51573 / DSM 12127 / PCA).